The sequence spans 240 residues: uncharacterized protein (240 aa).

It to H.influenzae HI_0575.

This is an uncharacterized protein from Escherichia coli (strain K12).